The following is a 910-amino-acid chain: Potassium/sodium hyperpolarization-activated cyclic nucleotide-gated channel 1 (910 aa).

The tract at residues 1–75 (MEGGGKPNSA…PAGSFEDAEG (75 aa)) is disordered. The Cytoplasmic portion of the chain corresponds to 1 to 131 (MEGGGKPNSA…WIIHPYSDFR (131 aa)). The chain crosses the membrane as a helical span at residues 132–153 (FYWDLIMLIMMVGNLVIIPVGI). Residues 154-162 (TFFTEQTTT) are Extracellular-facing. Residues 163–183 (PWIIFNVASDTVFLLDLIMNF) traverse the membrane as a helical segment. At 184–204 (RTGTVNEDSSEIILDPKVIKM) the chain is on the cytoplasmic side. A helical membrane pass occupies residues 205 to 225 (NYLKSWFVVDFISSIPVDYIF). Residues 226–249 (LIVEKGMDSEVYKTARALRIVRFT) lie on the Extracellular side of the membrane. The helical; Voltage-sensor transmembrane segment at 250-270 (KILSLLRLLRLSRLIRYIHQW) threads the bilayer. Residues 271 to 284 (EEIFHMTYDLASAV) are Cytoplasmic-facing. A helical membrane pass occupies residues 285–307 (VRIFNLIGMMLLLCHWDGCLQFL). Over 308–333 (VPLLQDFPPDCWVSLNEMVNDSWGKQ) the chain is Extracellular. Asn327 is a glycosylation site (N-linked (GlcNAc...) asparagine). Positions 334–355 (YSYALFKAMSHMLCIGYGAQAP) form an intramembrane region, pore-forming. Residues 347-351 (CIGYG) carry the Selectivity filter motif. Residues 356–360 (VSMSD) lie on the Extracellular side of the membrane. A helical membrane pass occupies residues 361 to 381 (LWITMLSMIVGATCYAMFVGH). The Cytoplasmic segment spans residues 382 to 910 (ATALIQSLDS…AEKPRFASNL (529 aa)). Positions 528, 529, 531, 538, 539, 579, and 582 each coordinate 3',5'-cyclic AMP. 3 disordered regions span residues 634 to 681 (TALN…QPSA), 771 to 791 (QQQQ…VHKS), and 865 to 910 (QMSS…ASNL). Residues 639-680 (TSSTTTPTSRMRTQSPPVYTATSLSHSNLHSPSPSTQTPQPS) are compositionally biased toward low complexity. Over residues 780–791 (GSSTPKNEVHKS) the composition is skewed to polar residues. A compositionally biased stretch (pro residues) spans 875-885 (RGVPPAPPPPA). The segment covering 900–910 (DAEKPRFASNL) has biased composition (basic and acidic residues).

This sequence belongs to the potassium channel HCN family. In terms of assembly, homotetramer. Heterotetramer with HCN2. The potassium channel is composed of a homo- or heterotetrameric complex of pore-forming subunits. Interacts with KCNE2. Interacts with the SH3 domain of CSK. In terms of processing, N-glycosylated. Predominantly expressed in brain. Highly expressed in apical dendrites of pyramidal neurons in the cortex, in the layer corresponding to the stratum lacunosum-moleculare in the hippocampus and in axons of basket cells in the cerebellum (at protein level). Expressed in a subset of elongated cells in taste buds.

It localises to the cell membrane. The enzyme catalyses Na(+)(in) = Na(+)(out). The catalysed reaction is K(+)(in) = K(+)(out). Its activity is regulated as follows. Activated by cAMP. cAMP binding causes a conformation change that leads to the assembly of an active tetramer and channel opening. Compared to other family members, cAMP has less stimulatory effect on HCN1 because part of the molecules already contain bound cAMP and form homotetramers when cAMP levels are low, this inherent tetramerization in HCN1 results in a weaker response to increased cAMP. Functionally, hyperpolarization-activated ion channel that are permeable to sodium and potassium ions. Exhibits weak selectivity for potassium over sodium ions. Contributes to the native pacemaker currents in heart (If) and in neurons (Ih). Participates in cerebellar mechanisms of motor learning. May mediate responses to sour stimuli. This chain is Potassium/sodium hyperpolarization-activated cyclic nucleotide-gated channel 1 (Hcn1), found in Mus musculus (Mouse).